The primary structure comprises 1485 residues: Putative E3 ubiquitin-protein ligase LIN-1 (1485 aa).

Positions Glu337–Asp353 are enriched in acidic residues. 2 disordered regions span residues Glu337–Pro363 and Asn384–Ser417. In terms of domain architecture, U-box spans Lys510–Leu585. 4 WD repeats span residues Ser1204–Ile1241, Glu1246–Ile1283, Ser1409–Ser1448, and Gly1454–Asp1485.

Expressed in roots and nodules, and at very low levels in calli and seedling shoots.

The enzyme catalyses S-ubiquitinyl-[E2 ubiquitin-conjugating enzyme]-L-cysteine + [acceptor protein]-L-lysine = [E2 ubiquitin-conjugating enzyme]-L-cysteine + N(6)-ubiquitinyl-[acceptor protein]-L-lysine.. The protein operates within protein modification; protein ubiquitination. Its function is as follows. Putative E3 ubiquitin-protein ligase involved in the rhizobial infection process. Plays an important role in the early steps of infection thread formation and in growth and differentiation of nodules. The polypeptide is Putative E3 ubiquitin-protein ligase LIN-1 (Lotus japonicus (Lotus corniculatus var. japonicus)).